Consider the following 450-residue polypeptide: Tubulin alpha chain (450 aa).

A GTP-binding site is contributed by Gln11. At Lys40 the chain carries N6-acetyllysine. 7 residues coordinate GTP: Glu71, Ser140, Gly144, Thr145, Thr179, Asn206, and Asn228. Mg(2+) is bound at residue Glu71. Glu254 is an active-site residue.

It belongs to the tubulin family. In terms of assembly, dimer of alpha and beta chains. A typical microtubule is a hollow water-filled tube with an outer diameter of 25 nm and an inner diameter of 15 nM. Alpha-beta heterodimers associate head-to-tail to form protofilaments running lengthwise along the microtubule wall with the beta-tubulin subunit facing the microtubule plus end conferring a structural polarity. Microtubules usually have 13 protofilaments but different protofilament numbers can be found in some organisms and specialized cells. The cofactor is Mg(2+). In terms of processing, acetylation of alpha chains at Lys-40 stabilizes microtubules and affects affinity and processivity of microtubule motors. This modification has a role in multiple cellular functions, ranging from cell motility, cell cycle progression or cell differentiation to intracellular trafficking and signaling.

Its subcellular location is the cytoplasm. It is found in the cytoskeleton. It catalyses the reaction GTP + H2O = GDP + phosphate + H(+). Tubulin is the major constituent of microtubules, a cylinder consisting of laterally associated linear protofilaments composed of alpha- and beta-tubulin heterodimers. Microtubules grow by the addition of GTP-tubulin dimers to the microtubule end, where a stabilizing cap forms. Below the cap, tubulin dimers are in GDP-bound state, owing to GTPase activity of alpha-tubulin. The protein is Tubulin alpha chain of Oxytricha granulifera (Ciliate).